We begin with the raw amino-acid sequence, 330 residues long: MTNKQPVRVAVTGAAGQIGYSLLFRIAAGDMLGKDQPVILQLLEITPALKALQGVVMELRDGAYPLLADVVTSDDPLVAFKDADYALLVGAMPRKAGMERGDLLGANGGIFKPQGQALNQVASRDVKVLVVGNPANTNALIAQQNAPDLDPRQFTAMVRLDHNRAISQLAEKTGQPVSAIKNITIWGNHSSTQYPDLSQATVGGRPALDLVDRTWYEQEYIPTVAKRGAAIIEARGASSAASAASAAIDHMRDWALGTSEGEWVSMGIPSDGSYGVPEGLIYGFPVTVKDGKYQIVQGLEISEFSRGKMDATARELEEERDEIRKLGLIS.

An NAD(+)-binding site is contributed by 13–19; that stretch reads GAAGQIG. Residues Arg-94 and Arg-100 each contribute to the substrate site. NAD(+) is bound by residues Asn-107, Gln-114, and 131-133; that span reads VGN. Substrate-binding residues include Asn-133 and Arg-164. His-189 serves as the catalytic Proton acceptor.

Belongs to the LDH/MDH superfamily. MDH type 2 family.

It catalyses the reaction (S)-malate + NAD(+) = oxaloacetate + NADH + H(+). Catalyzes the reversible oxidation of malate to oxaloacetate. This Deinococcus deserti (strain DSM 17065 / CIP 109153 / LMG 22923 / VCD115) protein is Malate dehydrogenase.